Here is a 335-residue protein sequence, read N- to C-terminus: uncharacterized protein (335 aa).

This is an uncharacterized protein from Acanthamoeba polyphaga mimivirus (APMV).